Reading from the N-terminus, the 253-residue chain is 5'/3'-nucleotidase SurE (253 aa).

A divalent metal cation-binding residues include aspartate 8, aspartate 9, serine 39, and asparagine 92.

Belongs to the SurE nucleotidase family. Requires a divalent metal cation as cofactor.

Its subcellular location is the cytoplasm. It catalyses the reaction a ribonucleoside 5'-phosphate + H2O = a ribonucleoside + phosphate. The catalysed reaction is a ribonucleoside 3'-phosphate + H2O = a ribonucleoside + phosphate. It carries out the reaction [phosphate](n) + H2O = [phosphate](n-1) + phosphate + H(+). Its function is as follows. Nucleotidase with a broad substrate specificity as it can dephosphorylate various ribo- and deoxyribonucleoside 5'-monophosphates and ribonucleoside 3'-monophosphates with highest affinity to 3'-AMP. Also hydrolyzes polyphosphate (exopolyphosphatase activity) with the preference for short-chain-length substrates (P20-25). Might be involved in the regulation of dNTP and NTP pools, and in the turnover of 3'-mononucleotides produced by numerous intracellular RNases (T1, T2, and F) during the degradation of various RNAs. This is 5'/3'-nucleotidase SurE from Salmonella paratyphi A (strain AKU_12601).